The following is a 379-amino-acid chain: Cytochrome b (379 aa).

4 helical membrane-spanning segments follow: residues 33-53 (FGSL…FLAM), 77-98 (WLIR…FIHV), 113-133 (WNIG…GYVL), and 178-198 (FFAF…VHLL). 2 residues coordinate heme b: His-83 and His-97. Heme b is bound by residues His-182 and His-196. An a ubiquinone-binding site is contributed by His-201. Helical transmembrane passes span 226–246 (IKDL…TLFF), 288–308 (LGGV…PLLN), 320–340 (VTQV…WIGG), and 347–367 (FTMI…ILIP).

This sequence belongs to the cytochrome b family. In terms of assembly, the cytochrome bc1 complex contains 11 subunits: 3 respiratory subunits (MT-CYB, CYC1 and UQCRFS1), 2 core proteins (UQCRC1 and UQCRC2) and 6 low-molecular weight proteins (UQCRH/QCR6, UQCRB/QCR7, UQCRQ/QCR8, UQCR10/QCR9, UQCR11/QCR10 and a cleavage product of UQCRFS1). This cytochrome bc1 complex then forms a dimer. The cofactor is heme b.

The protein resides in the mitochondrion inner membrane. Component of the ubiquinol-cytochrome c reductase complex (complex III or cytochrome b-c1 complex) that is part of the mitochondrial respiratory chain. The b-c1 complex mediates electron transfer from ubiquinol to cytochrome c. Contributes to the generation of a proton gradient across the mitochondrial membrane that is then used for ATP synthesis. The sequence is that of Cytochrome b (MT-CYB) from Akodon subfuscus (Puno grass mouse).